Reading from the N-terminus, the 769-residue chain is Trehalose 6-phosphate phosphorylase (769 aa).

Residue 342-343 (WD) coordinates substrate. Glu-480 acts as the Proton donor in catalysis. 589–590 (KQ) contributes to the substrate binding site.

This sequence belongs to the glycosyl hydrolase 65 family. In terms of assembly, monomer.

The enzyme catalyses alpha,alpha-trehalose 6-phosphate + phosphate = beta-D-glucose 1-phosphate + D-glucose 6-phosphate. Functionally, catalyzes the conversion of trehalose 6-phosphate into glucose 1-phosphate and glucose 6-phosphate. This is Trehalose 6-phosphate phosphorylase (trePP) from Lactococcus lactis subsp. lactis (strain IL1403) (Streptococcus lactis).